The chain runs to 383 residues: Lipid-A-disaccharide synthase (383 aa).

Belongs to the LpxB family.

It catalyses the reaction a lipid X + a UDP-2-N,3-O-bis[(3R)-3-hydroxyacyl]-alpha-D-glucosamine = a lipid A disaccharide + UDP + H(+). Its pathway is bacterial outer membrane biogenesis; LPS lipid A biosynthesis. Condensation of UDP-2,3-diacylglucosamine and 2,3-diacylglucosamine-1-phosphate to form lipid A disaccharide, a precursor of lipid A, a phosphorylated glycolipid that anchors the lipopolysaccharide to the outer membrane of the cell. This Aliivibrio salmonicida (strain LFI1238) (Vibrio salmonicida (strain LFI1238)) protein is Lipid-A-disaccharide synthase.